The chain runs to 187 residues: Accessory gene regulator protein B (187 aa).

A run of 5 helical transmembrane segments spans residues 49-69 (ISIF…YMLI), 82-102 (ILCY…LINI), 106-126 (FTYL…YAPA), 144-164 (LSII…PFYA), and 166-186 (FMLL…FPKE).

It belongs to the AgrB family.

The protein resides in the cell membrane. Essential for the production of a quorum sensing system signal molecule, the autoinducing peptide (AIP). This quorum sensing system is responsible for the regulation of the expression of virulence factor genes. Involved in the proteolytic processing of AgrD, the precursor of AIP. The polypeptide is Accessory gene regulator protein B (Staphylococcus aureus (strain Mu50 / ATCC 700699)).